The primary structure comprises 1005 residues: MEDLQPINPNTDSPTETGATTIEARFSYFCKGRLTMDDNALEEAMKLFNQSKHLFMTNASALGSGTPEEAEHYWFAFILFSMKRLSKKNDAEDAAKSNENSFKLYQILRVAKLNFVDFFKELPQFIVKTGPILSNLYGSDWETRLQAKELQANFVHLSLLSKYYKRAFKTLFKPSHDNVEGQSAVANSADYISNCHRFGWLLFLALRVHAFSRFKDLVTCTNGLVSILAILIIHIPARFRNFSMSDSSHFVKKDDKVVDLLASLCNMYETSEDELRKTMVRTNIVVEEILKKDPSMASECTNGNLDNIDTDDLTYFQDLLEEQSLSSDLDILEKDYDDAMLLEGELDERLFINDEESLLGSSSLSGGAINMTGTKRKIDSMTSPTKTITSPLSPYKSPSKMISTPVSTAMTTAKWLRTVVSPLSSFPSVDLTRFLQSCDKDVTSDVIKRARIILEAIFPSSGIPDRTVLSNTQTTNLMDNIWAEQRRLEALKLYYRVLHAMCKAESQILHGNNLTSLLTNERFHRCMLACSAELVLATHKTVTMLFPAVLERTGITAFDLSKVIESFIRHEESLPRELRRHLNSLEERLLESMVWEKGSSMYNSLTIARPNLSNEINRLGLLAGPMPSLDAIALQCNMSCGGLPPVPKRDTSPGKSGEIRSPKRVCNEYRSVLVERNSFTSPVKDRLLGIGNLKSKILSPALQSAFASPTRPHPTRGETCAETAVNLFFSKIVKLAAVRINGMVERMQLTQQIRERVYCLFQQILGQRTSLFFNRHIDQIILCCFYGVAKITQLSLTFKEIIFNYRKQPHCKPQVFRAVFVDDRSSSRRGKTGQDHVDIIMFYNEIFIPSVKPLLVELAPSNVPKNPNNQVSETNKKDESGPCPCPGSPKVSSFPSLPDMSPKKVSAVHNVYVSPLRSTKMDALISHGSKSYYACVGESTHAYQSPSKDLTAINNRLNGTRKVRGSLNFDEVDVGLVSDSLVSQSLYLQNGKGPASSSGQELKTE.

A domain A region spans residues 404 to 605 (TPVSTAMTTA…EKGSSMYNSL (202 aa)). A pocket region spans residues 404-853 (TPVSTAMTTA…NEIFIPSVKP (450 aa)). Residues 606–722 (TIARPNLSNE…HPTRGETCAE (117 aa)) are spacer. The tract at residues 723-853 (TAVNLFFSKI…NEIFIPSVKP (131 aa)) is domain B. Residues 863 to 873 (VPKNPNNQVSE) are compositionally biased toward polar residues. The interval 863–899 (VPKNPNNQVSETNKKDESGPCPCPGSPKVSSFPSLPD) is disordered.

The protein belongs to the retinoblastoma protein (RB) family.

It localises to the nucleus. Functionally, regulator of biological processes that recruits a histone deacetylase to control gene transcription. May play a role in the entry into mitosis, negatively regulating the cell proliferation. Formation of stable complexes with geminiviridae replication-associated proteins may create a cellular environment which favors viral DNA replication. The chain is Retinoblastoma-related protein (RBR) from Pilosella piloselloides (Glaucous king-devil hawkweed).